We begin with the raw amino-acid sequence, 1302 residues long: RNA-directed RNA polymerase (1302 aa).

One can recognise a RdRp catalytic domain in the interval 562-823 (VIVGDLEATG…QTHAKQGCYV (262 aa)).

Belongs to the reoviridae RNA-directed RNA polymerase family.

It catalyses the reaction RNA(n) + a ribonucleoside 5'-triphosphate = RNA(n+1) + diphosphate. The chain is RNA-directed RNA polymerase (Segment-1) from Antilocapra americana (Pronghorn).